The following is a 137-amino-acid chain: Small ribosomal subunit protein uS11 (137 aa).

The tract at residues 116–137 (EDVTPIPHDGTRPKGGRRGRRV) is disordered.

The protein belongs to the universal ribosomal protein uS11 family. Part of the 30S ribosomal subunit.

Located on the platform of the 30S subunit. The sequence is that of Small ribosomal subunit protein uS11 from Pyrococcus furiosus (strain ATCC 43587 / DSM 3638 / JCM 8422 / Vc1).